Consider the following 510-residue polypeptide: NAD(P)H-quinone oxidoreductase subunit 2, chloroplastic (510 aa).

The next 11 membrane-spanning stretches (helical) occupy residues 24–44, 59–79, 99–119, 124–144, 149–169, 183–203, 295–315, 323–343, 347–367, 395–415, and 418–438; these read LLLF…GLIL, WFYF…LFRW, IFQF…VEYI, MAIT…MFLC, LITI…LSGY, YLLM…WLYG, WHLL…LIAI, MLAY…IVGD, GYAS…GTFA, ALSS…AGFF, and LYLF…IGLL.

The protein belongs to the complex I subunit 2 family. As to quaternary structure, NDH is composed of at least 16 different subunits, 5 of which are encoded in the nucleus.

It is found in the plastid. It localises to the chloroplast thylakoid membrane. The enzyme catalyses a plastoquinone + NADH + (n+1) H(+)(in) = a plastoquinol + NAD(+) + n H(+)(out). It carries out the reaction a plastoquinone + NADPH + (n+1) H(+)(in) = a plastoquinol + NADP(+) + n H(+)(out). Its function is as follows. NDH shuttles electrons from NAD(P)H:plastoquinone, via FMN and iron-sulfur (Fe-S) centers, to quinones in the photosynthetic chain and possibly in a chloroplast respiratory chain. The immediate electron acceptor for the enzyme in this species is believed to be plastoquinone. Couples the redox reaction to proton translocation, and thus conserves the redox energy in a proton gradient. In Asparagus officinalis (Garden asparagus), this protein is NAD(P)H-quinone oxidoreductase subunit 2, chloroplastic.